Here is a 108-residue protein sequence, read N- to C-terminus: Large ribosomal subunit protein uL24 (108 aa).

It belongs to the universal ribosomal protein uL24 family. In terms of assembly, part of the 50S ribosomal subunit.

Functionally, one of two assembly initiator proteins, it binds directly to the 5'-end of the 23S rRNA, where it nucleates assembly of the 50S subunit. In terms of biological role, one of the proteins that surrounds the polypeptide exit tunnel on the outside of the subunit. The protein is Large ribosomal subunit protein uL24 of Mycoplasmopsis pulmonis (strain UAB CTIP) (Mycoplasma pulmonis).